A 1034-amino-acid polypeptide reads, in one-letter code: Tubulin glycylase 3D (1034 aa).

Polar residues-rich tracts occupy residues 1-13 (MINSHHTSQQTLN) and 131-146 (QVNSVLADNSNIQNDF). Disordered stretches follow at residues 1–21 (MINSHHTSQQTLNKESKSQMD), 131–166 (QVNSVLADNSNIQNDFYPQYRKPKNPTTKKRQSTDY), and 189–208 (LNQQNQQQQDLAKNRVDNSQ). Residues 151–161 (RKPKNPTTKKR) show a composition bias toward basic residues. Positions 189–199 (LNQQNQQQQDL) are enriched in low complexity. A TTL domain is found at 571 to 930 (DINNVIDDEK…YGMAQKSGIK (360 aa)). ATP is bound by residues 741–744 (QKYI), lysine 754, and aspartate 756. A disordered region spans residues 1002–1034 (HDQKQFSSQQANNIETYSRPQTAKSQTQSSKKL).

It localises to the cytoplasm. Functionally, probable glycylase which modifies tubulin, generating side chains of glycine on the gamma-carboxyl groups of specific glutamate residues within the C-terminal tail of tubulin. In Tetrahymena thermophila (strain SB210), this protein is Tubulin glycylase 3D (TTLL3D).